A 403-amino-acid chain; its full sequence is DNA primase DnaG (403 aa).

The 77-residue stretch at 172–248 folds into the Toprim domain; that stretch reads DSVIIVEGRA…HIDYIARAPP (77 aa). The Mg(2+) site is built by Glu-178, Asp-222, and Asp-224. The tract at residues 279–300 is disordered; that stretch reads AAGEKTEAPAQPTQQQPPPAEA.

The protein belongs to the archaeal DnaG primase family. As to quaternary structure, forms a ternary complex with MCM helicase and DNA. Component of the archaeal exosome complex. Mg(2+) serves as cofactor.

It carries out the reaction ssDNA + n NTP = ssDNA/pppN(pN)n-1 hybrid + (n-1) diphosphate.. Its function is as follows. RNA polymerase that catalyzes the synthesis of short RNA molecules used as primers for DNA polymerase during DNA replication. Also part of the exosome, which is a complex involved in RNA degradation. Acts as a poly(A)-binding protein that enhances the interaction between heteromeric, adenine-rich transcripts and the exosome. The protein is DNA primase DnaG of Pyrobaculum neutrophilum (strain DSM 2338 / JCM 9278 / NBRC 100436 / V24Sta) (Thermoproteus neutrophilus).